The chain runs to 477 residues: Argininosuccinate lyase (477 aa).

The protein belongs to the lyase 1 family. Argininosuccinate lyase subfamily.

The protein localises to the cytoplasm. The enzyme catalyses 2-(N(omega)-L-arginino)succinate = fumarate + L-arginine. It participates in amino-acid biosynthesis; L-arginine biosynthesis; L-arginine from L-ornithine and carbamoyl phosphate: step 3/3. This is Argininosuccinate lyase from Acinetobacter baumannii (strain ACICU).